We begin with the raw amino-acid sequence, 51 residues long: Insulin (51 aa).

Disulfide bonds link C7-C37, C19-C50, and C36-C41.

It belongs to the insulin family. As to quaternary structure, heterodimer of a B chain and an A chain linked by two disulfide bonds.

It localises to the secreted. In terms of biological role, insulin decreases blood glucose concentration. It increases cell permeability to monosaccharides, amino acids and fatty acids. It accelerates glycolysis, the pentose phosphate cycle, and glycogen synthesis in liver. The protein is Insulin (ins) of Anguilla rostrata (American eel).